Consider the following 398-residue polypeptide: E3 ubiquitin-protein ligase MARCHF11 (398 aa).

The span at 1–14 (MSDEGSKRGSRADS) shows a compositional bias: basic and acidic residues. Positions 1–158 (MSDEGSKRGS…GSGDQRSGHQ (158 aa)) are disordered. Over residues 19–31 (PPLPPPPPPPPPG) the composition is skewed to pro residues. Basic and acidic residues-rich tracts occupy residues 94–104 (EGPRRLPEVKL) and 121–130 (ACREGERRGT). The segment at 158–218 (QHQHHQPICK…ELCCYRYHVT (61 aa)) adopts an RING-CH-type zinc-finger fold. The Zn(2+) site is built by C166, C169, C182, C184, H192, C195, C208, and C211. 2 consecutive transmembrane segments (helical) span residues 241–261 (MIAV…LLWS) and 274–294 (ILFQ…IGLI). Positions 367–370 (YVLL) match the YXXL motif motif. Residues 395–398 (VTSV) carry the PDZ-binding motif.

Interacts (YXXL motif) with AP1M1. Interacts (via PDZ-binding motif) with LIN7A. Interacts with unidentified fucose glycoproteins. As to expression, predominantly expressed in testis. Present in early developing spermatids. Not present in spermatogonia, spermatocytes or somatic cells (i.e. peritubular, Leydig, and Sertoli cells). Present in early round spermatids at step 4, remains until step 11, then it decreases at steps 12-15, and diminishes after step 16 (at protein level). Also expressed at lower level in brain.

It localises to the cytoplasmic vesicle membrane. It catalyses the reaction S-ubiquitinyl-[E2 ubiquitin-conjugating enzyme]-L-cysteine + [acceptor protein]-L-lysine = [E2 ubiquitin-conjugating enzyme]-L-cysteine + N(6)-ubiquitinyl-[acceptor protein]-L-lysine.. The protein operates within protein modification; protein ubiquitination. In terms of biological role, E3 ubiquitin-protein ligase that mediates polyubiquitination of CD4. E3 ubiquitin ligases accept ubiquitin from an E2 ubiquitin-conjugating enzyme in the form of a thioester and then directly transfer the ubiquitin to targeted substrates. May play a role in ubuquitin-dependent protein sorting in developmenting spermatids. This is E3 ubiquitin-protein ligase MARCHF11 (Marchf11) from Rattus norvegicus (Rat).